The primary structure comprises 407 residues: Argininosuccinate synthase (407 aa).

ATP is bound by residues 16–24 and alanine 44; that span reads AYSGGLDTS. Residues tyrosine 96 and serine 101 each coordinate L-citrulline. Glycine 126 contacts ATP. The L-aspartate site is built by threonine 128, asparagine 132, and aspartate 133. Residue asparagine 132 participates in L-citrulline binding. 5 residues coordinate L-citrulline: arginine 136, serine 185, serine 194, glutamate 270, and tyrosine 282.

This sequence belongs to the argininosuccinate synthase family. Type 1 subfamily. As to quaternary structure, homotetramer.

Its subcellular location is the cytoplasm. The catalysed reaction is L-citrulline + L-aspartate + ATP = 2-(N(omega)-L-arginino)succinate + AMP + diphosphate + H(+). It functions in the pathway amino-acid biosynthesis; L-arginine biosynthesis; L-arginine from L-ornithine and carbamoyl phosphate: step 2/3. The sequence is that of Argininosuccinate synthase from Shewanella amazonensis (strain ATCC BAA-1098 / SB2B).